The sequence spans 316 residues: Probable porphobilinogen deaminase (316 aa).

Position 234 is an S-(dipyrrolylmethanemethyl)cysteine (cysteine 234).

It belongs to the HMBS family. Dipyrromethane is required as a cofactor.

It catalyses the reaction 4 porphobilinogen + H2O = hydroxymethylbilane + 4 NH4(+). Its pathway is porphyrin-containing compound metabolism; protoporphyrin-IX biosynthesis; coproporphyrinogen-III from 5-aminolevulinate: step 2/4. In terms of biological role, tetrapolymerization of the monopyrrole PBG into the hydroxymethylbilane pre-uroporphyrinogen in several discrete steps. This chain is Probable porphobilinogen deaminase, found in Methanosarcina barkeri (strain Fusaro / DSM 804).